The sequence spans 208 residues: Sec-independent protein translocase protein TatB (208 aa).

The chain crosses the membrane as a helical span at residues 1–21; the sequence is MFDIGVGELTLIAVVALVVLG. Positions 178–189 are enriched in low complexity; the sequence is APEPVAVAPVDA. Residues 178–208 are disordered; it reads APEPVAVAPVDAGTPAAWTPSAPAKLQEKQP.

The protein belongs to the TatB family. The Tat system comprises two distinct complexes: a TatABC complex, containing multiple copies of TatA, TatB and TatC subunits, and a separate TatA complex, containing only TatA subunits. Substrates initially bind to the TatABC complex, which probably triggers association of the separate TatA complex to form the active translocon.

The protein localises to the cell inner membrane. In terms of biological role, part of the twin-arginine translocation (Tat) system that transports large folded proteins containing a characteristic twin-arginine motif in their signal peptide across membranes. Together with TatC, TatB is part of a receptor directly interacting with Tat signal peptides. TatB may form an oligomeric binding site that transiently accommodates folded Tat precursor proteins before their translocation. This Xanthomonas euvesicatoria pv. vesicatoria (strain 85-10) (Xanthomonas campestris pv. vesicatoria) protein is Sec-independent protein translocase protein TatB.